The primary structure comprises 441 residues: Probable carboxypeptidase NFIA_052450 (441 aa).

The signal sequence occupies residues 1–16; the sequence is MKPLSSLLLSAALSAA. N88 and N150 each carry an N-linked (GlcNAc...) asparagine glycan. Position 166 (D166) interacts with Zn(2+). The active-site Proton acceptor is E198. Residue E199 coordinates Zn(2+). N354 and N373 each carry an N-linked (GlcNAc...) asparagine glycan.

The protein belongs to the peptidase M20A family. Requires Zn(2+) as cofactor.

The protein resides in the secreted. The chain is Probable carboxypeptidase NFIA_052450 from Neosartorya fischeri (strain ATCC 1020 / DSM 3700 / CBS 544.65 / FGSC A1164 / JCM 1740 / NRRL 181 / WB 181) (Aspergillus fischerianus).